Reading from the N-terminus, the 247-residue chain is Triosephosphate isomerase (247 aa).

Residues Asn-10 and Lys-12 each coordinate substrate. His-94 (electrophile) is an active-site residue. Glu-164 acts as the Proton acceptor in catalysis.

It belongs to the triosephosphate isomerase family. In terms of assembly, homodimer.

It localises to the cytoplasm. It carries out the reaction D-glyceraldehyde 3-phosphate = dihydroxyacetone phosphate. The catalysed reaction is dihydroxyacetone phosphate = methylglyoxal + phosphate. It participates in carbohydrate biosynthesis; gluconeogenesis. It functions in the pathway carbohydrate degradation; glycolysis; D-glyceraldehyde 3-phosphate from glycerone phosphate: step 1/1. Functionally, triosephosphate isomerase is an extremely efficient metabolic enzyme that catalyzes the interconversion between dihydroxyacetone phosphate (DHAP) and D-glyceraldehyde-3-phosphate (G3P) in glycolysis and gluconeogenesis. It is also responsible for the non-negligible production of methylglyoxal a reactive cytotoxic side-product that modifies and can alter proteins, DNA and lipids. This Latimeria chalumnae (Coelacanth) protein is Triosephosphate isomerase.